The following is an 87-amino-acid chain: uncharacterized protein (87 aa).

The disordered stretch occupies residues 43 to 87 (NQGYGQNFGDASGFMGTRSHVDDRDQIDSPASFESEAVNSSIKRK).

This is an uncharacterized protein from Bacillus subtilis (strain 168).